We begin with the raw amino-acid sequence, 306 residues long: Ribonuclease Z (306 aa).

Positions 63, 65, 67, 68, 141, 211, and 269 each coordinate Zn(2+). Asp-67 functions as the Proton acceptor in the catalytic mechanism.

This sequence belongs to the RNase Z family. In terms of assembly, homodimer. The cofactor is Zn(2+).

It catalyses the reaction Endonucleolytic cleavage of RNA, removing extra 3' nucleotides from tRNA precursor, generating 3' termini of tRNAs. A 3'-hydroxy group is left at the tRNA terminus and a 5'-phosphoryl group is left at the trailer molecule.. In terms of biological role, zinc phosphodiesterase, which displays some tRNA 3'-processing endonuclease activity. Probably involved in tRNA maturation, by removing a 3'-trailer from precursor tRNA. The sequence is that of Ribonuclease Z from Macrococcus caseolyticus (strain JCSC5402) (Macrococcoides caseolyticum).